Reading from the N-terminus, the 144-residue chain is MLLNTLSPAAGSKHAPKRLGRGVGSGLGKTGGRGHKGQKSRSGGKVRPGFEGGQMPLKQRLPKFGFTSRKSFVSAEVRLSELAKVTGDVVDLNALKAANLVTKNIEFAKIVLSGEISKAVTVKGLRVTKGAKAAIEAAGGKIEE.

The tract at residues 1–57 (MLLNTLSPAAGSKHAPKRLGRGVGSGLGKTGGRGHKGQKSRSGGKVRPGFEGGQMPL) is disordered. The span at 21 to 31 (RGVGSGLGKTG) shows a compositional bias: gly residues. The span at 32–44 (GRGHKGQKSRSGG) shows a compositional bias: basic residues.

This sequence belongs to the universal ribosomal protein uL15 family. As to quaternary structure, part of the 50S ribosomal subunit.

Binds to the 23S rRNA. The sequence is that of Large ribosomal subunit protein uL15 from Vibrio cholerae serotype O1 (strain ATCC 39541 / Classical Ogawa 395 / O395).